We begin with the raw amino-acid sequence, 255 residues long: 4-hydroxy-tetrahydrodipicolinate reductase (255 aa).

NAD(+)-binding positions include 8-13 (GANGRV), 88-90 (GTT), and 112-115 (ATNM). Catalysis depends on His144, which acts as the Proton donor/acceptor. His145 contributes to the (S)-2,3,4,5-tetrahydrodipicolinate binding site. Lys148 (proton donor) is an active-site residue. 154 to 155 (GT) lines the (S)-2,3,4,5-tetrahydrodipicolinate pocket.

This sequence belongs to the DapB family.

The protein localises to the cytoplasm. The enzyme catalyses (S)-2,3,4,5-tetrahydrodipicolinate + NAD(+) + H2O = (2S,4S)-4-hydroxy-2,3,4,5-tetrahydrodipicolinate + NADH + H(+). It carries out the reaction (S)-2,3,4,5-tetrahydrodipicolinate + NADP(+) + H2O = (2S,4S)-4-hydroxy-2,3,4,5-tetrahydrodipicolinate + NADPH + H(+). It functions in the pathway amino-acid biosynthesis; L-lysine biosynthesis via DAP pathway; (S)-tetrahydrodipicolinate from L-aspartate: step 4/4. In terms of biological role, catalyzes the conversion of 4-hydroxy-tetrahydrodipicolinate (HTPA) to tetrahydrodipicolinate. This chain is 4-hydroxy-tetrahydrodipicolinate reductase, found in Sulfurimonas denitrificans (strain ATCC 33889 / DSM 1251) (Thiomicrospira denitrificans (strain ATCC 33889 / DSM 1251)).